The sequence spans 590 residues: Aspartate--tRNA(Asp/Asn) ligase (590 aa).

Residue Glu-175 coordinates L-aspartate. The tract at residues 199 to 202 (QQYK) is aspartate. 2 residues coordinate L-aspartate: Arg-221 and His-450. 221 to 223 (RDE) contacts ATP. Glu-484 contacts ATP. Residue Arg-491 participates in L-aspartate binding. Residue 536–539 (GVDR) coordinates ATP.

Belongs to the class-II aminoacyl-tRNA synthetase family. Type 1 subfamily. In terms of assembly, homodimer.

Its subcellular location is the cytoplasm. It carries out the reaction tRNA(Asx) + L-aspartate + ATP = L-aspartyl-tRNA(Asx) + AMP + diphosphate. Functionally, aspartyl-tRNA synthetase with relaxed tRNA specificity since it is able to aspartylate not only its cognate tRNA(Asp) but also tRNA(Asn). Reaction proceeds in two steps: L-aspartate is first activated by ATP to form Asp-AMP and then transferred to the acceptor end of tRNA(Asp/Asn). The chain is Aspartate--tRNA(Asp/Asn) ligase from Rhodopseudomonas palustris (strain HaA2).